Reading from the N-terminus, the 492-residue chain is Linolenate hydroperoxide lyase, chloroplastic (492 aa).

Positions 1 to 33 (MLLRTMAATSPRPPPSTSLTSQQPPSPPSQLPL) are disordered. The N-terminal 34 residues, 1-34 (MLLRTMAATSPRPPPSTSLTSQQPPSPPSQLPLR), are a transit peptide targeting the chloroplast. C454 is a binding site for heme.

Belongs to the cytochrome P450 family. Heme is required as a cofactor. Expressed in roots, leaves, flowers and siliques.

Its subcellular location is the plastid. It localises to the chloroplast. Catalyzes the conversion of (9Z,11E,15Z)-(13S)-hydroperoxyoctadeca-9,11,15-trienoate to (9Z)-12-oxo-dodec-9-enoate and cis-3-hexenal. Possesses low activity toward (9Z,11E)-(13S)-13-hydroperoxyoctadeca-9,11-dienoate. Required for the synthesis of the green leaf volatiles (GLVs) hexanal and trans-2-hexenal. The chain is Linolenate hydroperoxide lyase, chloroplastic from Arabidopsis thaliana (Mouse-ear cress).